The primary structure comprises 68 residues: Large ribosomal subunit protein uL29 (68 aa).

It belongs to the universal ribosomal protein uL29 family.

This is Large ribosomal subunit protein uL29 from Methanobrevibacter smithii (strain ATCC 35061 / DSM 861 / OCM 144 / PS).